Consider the following 194-residue polypeptide: ATP-dependent Clp protease proteolytic subunit (194 aa).

Ser-98 (nucleophile) is an active-site residue. The active site involves His-123.

The protein belongs to the peptidase S14 family. In terms of assembly, fourteen ClpP subunits assemble into 2 heptameric rings which stack back to back to give a disk-like structure with a central cavity, resembling the structure of eukaryotic proteasomes.

The protein localises to the cytoplasm. The enzyme catalyses Hydrolysis of proteins to small peptides in the presence of ATP and magnesium. alpha-casein is the usual test substrate. In the absence of ATP, only oligopeptides shorter than five residues are hydrolyzed (such as succinyl-Leu-Tyr-|-NHMec, and Leu-Tyr-Leu-|-Tyr-Trp, in which cleavage of the -Tyr-|-Leu- and -Tyr-|-Trp bonds also occurs).. Cleaves peptides in various proteins in a process that requires ATP hydrolysis. Has a chymotrypsin-like activity. Plays a major role in the degradation of misfolded proteins. The sequence is that of ATP-dependent Clp protease proteolytic subunit from Alkaliphilus metalliredigens (strain QYMF).